A 133-amino-acid chain; its full sequence is p53 and DNA damage-regulated protein 1 (133 aa).

This sequence belongs to the prefoldin subunit beta family. In terms of assembly, component of the PAQosome complex which is responsible for the biogenesis of several protein complexes and which consists of R2TP complex members RUVBL1, RUVBL2, RPAP3 and PIH1D1, URI complex members PFDN2, PFDN6, PDRG1, UXT and URI1 as well as ASDURF, POLR2E and DNAAF10/WDR92.

It is found in the cytoplasm. Functionally, may play a role in chaperone-mediated protein folding. The protein is p53 and DNA damage-regulated protein 1 (Pdrg1) of Rattus norvegicus (Rat).